We begin with the raw amino-acid sequence, 588 residues long: D-3-phosphoglycerate dehydrogenase 3, chloroplastic (588 aa).

A chloroplast-targeting transit peptide spans 1–38 (MATSLNLSSIFSSSSRLVTTPSSVFPIRQRRRIILVTS). NAD(+)-binding positions include 195–196 (KV), Asp-215, 274–276 (VAR), and Asp-300. Residue Arg-276 is part of the active site. Residue Glu-305 is part of the active site. His-324 serves as the catalytic Proton donor. 324–327 (HLGA) contacts NAD(+). The region spanning 516–588 (VILCRQVDQP…AIEEFVFLKL (73 aa)) is the ACT domain.

It belongs to the D-isomer specific 2-hydroxyacid dehydrogenase family. As to expression, expressed in aerial parts. Not detected in roots and meristematic tissue. Expressed in cotyledons, adult leaves, stigma and anther filaments. Detected in the embryo.

It is found in the plastid. Its subcellular location is the chloroplast. The enzyme catalyses (2R)-3-phosphoglycerate + NAD(+) = 3-phosphooxypyruvate + NADH + H(+). It participates in amino-acid biosynthesis; L-serine biosynthesis; L-serine from 3-phospho-D-glycerate: step 1/3. With respect to regulation, partially inhibited by 1 mM serine. Functionally, involved in the plastidial phosphorylated pathway of serine biosynthesis (PPSB). This Arabidopsis thaliana (Mouse-ear cress) protein is D-3-phosphoglycerate dehydrogenase 3, chloroplastic (PGDH3).